We begin with the raw amino-acid sequence, 184 residues long: Probable RNA 2'-phosphotransferase (184 aa).

Belongs to the KptA/TPT1 family.

In terms of biological role, removes the 2'-phosphate from RNA via an intermediate in which the phosphate is ADP-ribosylated by NAD followed by a presumed transesterification to release the RNA and generate ADP-ribose 1''-2''-cyclic phosphate (APPR&gt;P). May function as an ADP-ribosylase. The polypeptide is Probable RNA 2'-phosphotransferase (Escherichia coli (strain 55989 / EAEC)).